A 72-amino-acid chain; its full sequence is MKLTSVVIVAVLFLAACQLTTSDGSRGTWKDRAVRSITKVSMLRWPCKVAGSPCGLVSECCGTCNVLRNRCV.

Positions 1-22 are cleaved as a signal peptide; that stretch reads MKLTSVVIVAVLFLAACQLTTS. Residues 23–46 constitute a propeptide that is removed on maturation; it reads DGSRGTWKDRAVRSITKVSMLRWP. Disulfide bonds link cysteine 47/cysteine 61, cysteine 54/cysteine 64, and cysteine 60/cysteine 71.

This sequence belongs to the conotoxin O1 superfamily. In terms of tissue distribution, expressed by the venom duct.

The protein resides in the secreted. This chain is Conotoxin Lt6.3, found in Conus litteratus (Lettered cone).